An 80-amino-acid polypeptide reads, in one-letter code: U-scoloptoxin(15)-Er1a (80 aa).

The N-terminal stretch at 1 to 22 (MQNKGVVLTLFLVVSMAIVISS) is a signal peptide.

This sequence belongs to the scoloptoxin-15 family. In terms of processing, contains 2 disulfide bonds. In terms of tissue distribution, expressed by the venom gland.

It localises to the secreted. The protein is U-scoloptoxin(15)-Er1a of Ethmostigmus rubripes (Giant centipede).